Here is a 101-residue protein sequence, read N- to C-terminus: Albumin (101 aa).

Albumin domains follow at residues 1–80 (DAEH…AFXY) and 81–101 (ESGA…PDVL). A Cu cation-binding site is contributed by His4.

This sequence belongs to the ALB/AFP/VDB family. Plasma.

It is found in the secreted. Binds water, Ca(2+), Na(+), K(+), fatty acids, hormones, bilirubin and drugs. Its main function is the regulation of the colloidal osmotic pressure of blood. The protein is Albumin (alb) of Neoceratodus forsteri (Australian lungfish).